A 293-amino-acid chain; its full sequence is N-acetylneuraminate lyase (293 aa).

Positions 48 and 49 each coordinate aceneuramate. Catalysis depends on tyrosine 137, which acts as the Proton donor. Lysine 165 (schiff-base intermediate with substrate) is an active-site residue. Threonine 167, glycine 189, aspartate 191, glutamate 192, and serine 208 together coordinate aceneuramate.

It belongs to the DapA family. NanA subfamily. Homotetramer.

It is found in the cytoplasm. It carries out the reaction aceneuramate = aldehydo-N-acetyl-D-mannosamine + pyruvate. It participates in amino-sugar metabolism; N-acetylneuraminate degradation; D-fructose 6-phosphate from N-acetylneuraminate: step 1/5. Catalyzes the reversible aldol cleavage of N-acetylneuraminic acid (sialic acid; Neu5Ac) to form pyruvate and N-acetylmannosamine (ManNAc) via a Schiff base intermediate. The protein is N-acetylneuraminate lyase of Staphylococcus aureus (strain bovine RF122 / ET3-1).